Consider the following 615-residue polypeptide: Medium-chain acyl-CoA ligase ACSF2, mitochondrial (615 aa).

The N-terminal 49 residues, 1–49 (MAVYLGMLRLGRLCVASLGARGPRTPLSRPWPNSKLQGVRAFSSGMVDC), are a transit peptide targeting the mitochondrion. At Lys179 the chain carries N6-acetyllysine. Lys182 is modified (N6-acetyllysine; alternate). Position 182 is an N6-succinyllysine; alternate (Lys182). At Lys199 the chain carries N6-acetyllysine. 263–271 (TSGTTGNPK) lines the ATP pocket. 2 positions are modified to N6-acetyllysine: Lys340 and Lys398. Position 478 is an N6-succinyllysine (Lys478). The ATP site is built by Asp493 and Arg508. Lys510 bears the N6-acetyllysine mark. 2 positions are modified to N6-acetyllysine; alternate: Lys544 and Lys570. Lys544 and Lys570 each carry N6-succinyllysine; alternate. Lys599 contributes to the ATP binding site. Position 599 is an N6-succinyllysine (Lys599).

The protein belongs to the ATP-dependent AMP-binding enzyme family.

The protein resides in the mitochondrion. The enzyme catalyses a medium-chain fatty acid + ATP + CoA = a medium-chain fatty acyl-CoA + AMP + diphosphate. It carries out the reaction octanoate + ATP + CoA = octanoyl-CoA + AMP + diphosphate. Acyl-CoA synthases catalyze the initial reaction in fatty acid metabolism, by forming a thioester with CoA. Has some preference toward medium-chain substrates. Plays a role in adipocyte differentiation. The polypeptide is Medium-chain acyl-CoA ligase ACSF2, mitochondrial (Rattus norvegicus (Rat)).